Reading from the N-terminus, the 147-residue chain is Hemoglobin subunit gamma-2 (147 aa).

The region spanning 3 to 147 is the Globin domain; that stretch reads HFTEEDKATI…VASALSSRYH (145 aa). Threonine 13 is modified (phosphothreonine). Residues serine 45, serine 51, and serine 53 each carry the phosphoserine modification. N6-acetyllysine is present on lysine 60. Histidine 64 serves as a coordination point for heme b. Lysine 83 carries the post-translational modification N6-acetyllysine. Residue histidine 93 coordinates heme b. S-nitrosocysteine is present on cysteine 94. Serine 140, serine 143, and serine 144 each carry phosphoserine.

This sequence belongs to the globin family. As to quaternary structure, heterotetramer of two alpha chains and two gamma chains in fetal hemoglobin (Hb F). In terms of tissue distribution, red blood cells.

In terms of biological role, gamma chains make up the fetal hemoglobin F, in combination with alpha chains. This is Hemoglobin subunit gamma-2 (HBG2) from Pongo pygmaeus (Bornean orangutan).